Here is a 348-residue protein sequence, read N- to C-terminus: MTDYAAHQQALDRDCLTLSRHVLQQLQSFDAAAQDLSALMNRIALAGKLIARRLSRAGLMEGVLGFTGAVNIQGEDVKKMDVYANEVFIAAFKQSGLVCRLASEEMAQPYYIPENCPIGRYTLLYDPLDGSSNVDINLNVGSIFAIRQQEGTDLDSTAADLLQDGHQQIAAGYILYGPSTMLVYSLGKGTHVFVLDPSLGEFILAIENLQIPASGAIYSVNEGNFWAWEEPIRNYVRHVHRQPGYSARYSGALVADIHRILMEGGVFLYPGTQKNPAGKLRLLYEAAPIAFLVEQAGGKASTGTQPLLDVVPDHLHMRTPLIVGSPENVALVESFIQQTPAQPTVTQV.

Mg(2+) is bound by residues Glu-104, Asp-126, Leu-128, and Asp-129. Residues Asp-129–Ser-132, Asn-221, Tyr-249, and Lys-279 contribute to the substrate site. Glu-285 is a Mg(2+) binding site.

It belongs to the FBPase class 1 family. As to quaternary structure, homotetramer. Mg(2+) is required as a cofactor.

The protein localises to the cytoplasm. The catalysed reaction is beta-D-fructose 1,6-bisphosphate + H2O = beta-D-fructose 6-phosphate + phosphate. It participates in carbohydrate biosynthesis; Calvin cycle. The sequence is that of Fructose-1,6-bisphosphatase class 1 from Thermosynechococcus vestitus (strain NIES-2133 / IAM M-273 / BP-1).